Consider the following 156-residue polypeptide: Ribosome-binding factor A (156 aa).

Residues 124–156 (TRAEYAGEAQPYRLEEEPEGSGDEVPPPGGDQR) form a disordered region.

This sequence belongs to the RbfA family. In terms of assembly, monomer. Binds 30S ribosomal subunits, but not 50S ribosomal subunits or 70S ribosomes.

The protein resides in the cytoplasm. Functionally, one of several proteins that assist in the late maturation steps of the functional core of the 30S ribosomal subunit. Associates with free 30S ribosomal subunits (but not with 30S subunits that are part of 70S ribosomes or polysomes). Required for efficient processing of 16S rRNA. May interact with the 5'-terminal helix region of 16S rRNA. The chain is Ribosome-binding factor A from Salinispora tropica (strain ATCC BAA-916 / DSM 44818 / JCM 13857 / NBRC 105044 / CNB-440).